Here is a 490-residue protein sequence, read N- to C-terminus: GTPase Der (490 aa).

EngA-type G domains are found at residues 3–166 (PVVA…MDDV) and 203–376 (IKLA…DSST). GTP-binding positions include 9-16 (GRPNVGKS), 56-60 (DTGGI), 118-121 (NKTD), 209-216 (GRPNVGKS), 256-260 (DTAGV), and 321-324 (NKWD). One can recognise a KH-like domain in the interval 377–461 (RRVSTAMLTR…PIRIQFKEGE (85 aa)).

This sequence belongs to the TRAFAC class TrmE-Era-EngA-EngB-Septin-like GTPase superfamily. EngA (Der) GTPase family. Associates with the 50S ribosomal subunit.

GTPase that plays an essential role in the late steps of ribosome biogenesis. This Salmonella newport (strain SL254) protein is GTPase Der.